The sequence spans 147 residues: Small ribosomal subunit protein uS12 (147 aa).

Belongs to the universal ribosomal protein uS12 family. Part of the 30S ribosomal subunit.

Its function is as follows. With S4 and S5 plays an important role in translational accuracy. Located at the interface of the 30S and 50S subunits. The sequence is that of Small ribosomal subunit protein uS12 from Pyrobaculum arsenaticum (strain DSM 13514 / JCM 11321 / PZ6).